Consider the following 265-residue polypeptide: 5'-nucleotidase SurE (265 aa).

Residues Asp12, Asp13, Ser43, and Asn91 each contribute to the a divalent metal cation site.

It belongs to the SurE nucleotidase family. It depends on a divalent metal cation as a cofactor.

It localises to the cytoplasm. It catalyses the reaction a ribonucleoside 5'-phosphate + H2O = a ribonucleoside + phosphate. Its function is as follows. Nucleotidase that shows phosphatase activity on nucleoside 5'-monophosphates. The sequence is that of 5'-nucleotidase SurE from Haloquadratum walsbyi (strain DSM 16790 / HBSQ001).